Here is a 603-residue protein sequence, read N- to C-terminus: UvrABC system protein C (603 aa).

The GIY-YIG domain maps to 15-92; that stretch reads DQPGCYLMKD…IKKHDPRFNI (78 aa). Positions 197 to 232 constitute a UVR domain; sequence KTVKNDLMKKMQEAAENMEFEKAGEFRDQINAIETT.

It belongs to the UvrC family. Interacts with UvrB in an incision complex.

It is found in the cytoplasm. Functionally, the UvrABC repair system catalyzes the recognition and processing of DNA lesions. UvrC both incises the 5' and 3' sides of the lesion. The N-terminal half is responsible for the 3' incision and the C-terminal half is responsible for the 5' incision. This Listeria innocua serovar 6a (strain ATCC BAA-680 / CLIP 11262) protein is UvrABC system protein C.